Here is a 263-residue protein sequence, read N- to C-terminus: MGYLKRLVLYIVIMVMSVFIIGCDKSSDTAENPKEGSKEAQIKKSFSKTLDMYPIKNLENLYDKEGYRDGEFKKGDKGTWTISTDFAKSNKQGEMNSEGMVLHFNRNTRTATGYYTVRTTYDEVDKLAREKKYRVEFKNNKIVLLDKVEDENLKQKIENFKFFGQYADFKDLKNYKNGRISSNENVPYYEAEYKRNNSDGNVKKLREKYPITTKQSPILKLHIDGDIKGSSVGYKQIEYTFSKEKDDETFMSDFLNFGPSHSK.

Positions 1–22 are cleaved as a signal peptide; that stretch reads MGYLKRLVLYIVIMVMSVFIIG. A lipid anchor (N-palmitoyl cysteine) is attached at Cys-23. Cys-23 carries the S-diacylglycerol cysteine lipid modification.

This sequence belongs to the staphylococcal tandem lipoprotein family.

The protein resides in the cell membrane. This is an uncharacterized protein from Staphylococcus aureus (strain N315).